Here is a 297-residue protein sequence, read N- to C-terminus: Adrenocorticotropic hormone receptor (297 aa).

The Extracellular segment spans residues 1–23 (MKHIINSYENINNTARNNSDCPR). N-linked (GlcNAc...) asparagine glycosylation is found at Asn-12 and Asn-17. Disulfide bonds link Cys-21/Cys-253 and Cys-245/Cys-251. Residues 24–49 (VVLPEEIFFTISIVGVLENLIVLLAV) traverse the membrane as a helical segment. Over 50-58 (FKNKNLQAP) the chain is Cytoplasmic. The helical transmembrane segment at 59 to 79 (MYFFICSLAISDMLGSLYKIL) threads the bilayer. Residues 80–104 (ENILIILRNMGYLKPRGSFETTADD) lie on the Extracellular side of the membrane. The helical transmembrane segment at 105–126 (IIDSLFVLSLLGSIFSLSVIAA) threads the bilayer. Residues 127 to 147 (DRYITIFHALRYHSIVTMRRT) are Cytoplasmic-facing. A helical transmembrane segment spans residues 148–168 (VVVLTVIWTFCTGTGITMVIF). At 169–180 (SHHVPTVITFTS) the chain is on the extracellular side. The chain crosses the membrane as a helical span at residues 181 to 199 (LFPLMLVFILCLYVHMFLL). At 200–217 (ARSHTRKISTLPRANMKG) the chain is on the cytoplasmic side. The chain crosses the membrane as a helical span at residues 218-244 (AITLTILLGVFIFCWAPFVLHVLLMTF). The Extracellular segment spans residues 245-256 (CPSNPYCACYMS). A helical transmembrane segment spans residues 257-278 (LFQVNGMLIMCNAVIDPFIYAF). Topologically, residues 279-297 (RSPELRDAFKKMIFCSRYW) are cytoplasmic. Cys-293 is lipidated: S-palmitoyl cysteine.

The protein belongs to the G-protein coupled receptor 1 family. Homodimer. Interacts with corticotropin (ACTH). Interacts with MRAP; this interaction targets MC2R to the plasma membrane. Interacts with MRAP2; competing with MRAP for binding to MC2R and impairing the binding of corticotropin (ACTH). In terms of processing, ubiquitinated by MGRN1 that may be involved in post-endocytic trafficking and/or degradation of internalized receptor. In terms of tissue distribution, melanocytes and corticoadrenal tissue.

Its subcellular location is the cell membrane. Hormone receptor primarily expressed in adrenal cortex that plays a key role in regulating adrenocortical function. Upon corticotropin (ACTH) binding, facilitates the release of adrenal glucocorticoids, including cortisol and corticosterone. In addition, MC2R is required for fetal and neonatal adrenal gland development. Mechanistically, activates adenylate cyclase (cAMP), the MAPK cascade as well as the cAMP-dependent protein kinase A pathway leading to steroidogenic factor 1/NR5A1-mediated transcriptional activation. In Homo sapiens (Human), this protein is Adrenocorticotropic hormone receptor (MC2R).